The chain runs to 202 residues: MGCRQSRHSRGKRAEKVEETQTELLEALDKEGRILEGRHEEAGQVPQTSNAQEKVSLSDCIQEAKASLQNTCASHVSPQEATQAKMNKVDGSILSRLYRNHIQDYGSPGPFWEQELESLHHVIEMKNERIHELEKQLFLLEMLKEKNLILALKNTTLRQEVEDLQFQAGNRLTMSRQLRKDLLQDLEKESQNGHCCSRRRSH.

Residues 1–11 are compositionally biased toward basic residues; it reads MGCRQSRHSRG. 2 disordered regions span residues 1–20 and 32–52; these read MGCRQSRHSRGKRAEKVEET and GRILEGRHEEAGQVPQTSNAQ. Glycine 2 is lipidated: N-myristoyl glycine. Basic and acidic residues predominate over residues 32–42; sequence GRILEGRHEEA. A Phosphoserine modification is found at serine 92. The stretch at 112–146 forms a coiled coil; sequence WEQELESLHHVIEMKNERIHELEKQLFLLEMLKEK.

It belongs to the CCDC69 family.

The protein resides in the cytoplasm. It localises to the cytoskeleton. Its subcellular location is the spindle. The protein localises to the midbody. In terms of biological role, may act as a scaffold to regulate the recruitment and assembly of spindle midzone components. Required for the localization of AURKB and PLK1 to the spindle midzone. The polypeptide is Coiled-coil domain-containing protein 69 (Ccdc69) (Mus musculus (Mouse)).